Here is a 185-residue protein sequence, read N- to C-terminus: Threonylcarbamoyl-AMP synthase (185 aa).

The region spanning 4–185 is the YrdC-like domain; that stretch reads SFRAQCAARV…LVTGQVIRPA (182 aa).

Belongs to the SUA5 family. TsaC subfamily.

Its subcellular location is the cytoplasm. The enzyme catalyses L-threonine + hydrogencarbonate + ATP = L-threonylcarbamoyladenylate + diphosphate + H2O. In terms of biological role, required for the formation of a threonylcarbamoyl group on adenosine at position 37 (t(6)A37) in tRNAs that read codons beginning with adenine. Catalyzes the conversion of L-threonine, HCO(3)(-)/CO(2) and ATP to give threonylcarbamoyl-AMP (TC-AMP) as the acyladenylate intermediate, with the release of diphosphate. The protein is Threonylcarbamoyl-AMP synthase of Pseudomonas aeruginosa (strain UCBPP-PA14).